The following is a 189-amino-acid chain: Interferon alpha-A (189 aa).

A signal peptide spans 1–23 (MAPAWSFLLSLLLLSCNAICSLG). Intrachain disulfides connect Cys24-Cys122 and Cys52-Cys162.

This sequence belongs to the alpha/beta interferon family.

The protein localises to the secreted. Produced by macrophages, IFN-alpha have antiviral activities. Interferon stimulates the production of two enzymes: a protein kinase and an oligoadenylate synthetase. This is Interferon alpha-A (IFNAA) from Bos taurus (Bovine).